The sequence spans 1295 residues: DNA-directed RNA polymerase subunit beta' (1295 aa).

Zn(2+) is bound by residues Cys60, Cys62, Cys75, and Cys78. The Mg(2+) site is built by Asp516, Asp518, and Asp520. Zn(2+) contacts are provided by Cys841, Cys914, Cys921, and Cys924.

The protein belongs to the RNA polymerase beta' chain family. The RNAP catalytic core consists of 2 alpha, 1 beta, 1 beta' and 1 omega subunit. When a sigma factor is associated with the core the holoenzyme is formed, which can initiate transcription. Mg(2+) is required as a cofactor. The cofactor is Zn(2+).

The enzyme catalyses RNA(n) + a ribonucleoside 5'-triphosphate = RNA(n+1) + diphosphate. Functionally, DNA-dependent RNA polymerase catalyzes the transcription of DNA into RNA using the four ribonucleoside triphosphates as substrates. The sequence is that of DNA-directed RNA polymerase subunit beta' from Dehalococcoides mccartyi (strain ATCC BAA-2100 / JCM 16839 / KCTC 5957 / BAV1).